The following is a 474-amino-acid chain: Cyclin-dependent kinase 18 (474 aa).

A phosphoserine mark is found at Ser14, Ser74, Ser89, Ser98, Ser117, and Ser132. The interval 44–93 (NLQLGPLGRDPPQECSTFSPTDSGEEPGQLSPGVQFQRRQNQRRFSMEDV) is disordered. The region spanning 144–425 (YVKLDKLGEG…AEAALSHSYF (282 aa)) is the Protein kinase domain. ATP contacts are provided by residues 150 to 158 (LGEGTYATV) and Lys173. Asp265 functions as the Proton acceptor in the catalytic mechanism. Ser440 and Ser443 each carry phosphoserine.

It belongs to the protein kinase superfamily. CMGC Ser/Thr protein kinase family. CDC2/CDKX subfamily. As to expression, isoform 2 expression is limited to several subcortical nuclei of the basal gangli and the spinal cord. Isoform 1 is widely expressed.

It carries out the reaction L-seryl-[protein] + ATP = O-phospho-L-seryl-[protein] + ADP + H(+). The enzyme catalyses L-threonyl-[protein] + ATP = O-phospho-L-threonyl-[protein] + ADP + H(+). Functionally, may play a role in signal transduction cascades in terminally differentiated cells. In Homo sapiens (Human), this protein is Cyclin-dependent kinase 18 (CDK18).